The following is a 1406-amino-acid chain: MKDLLKFLKAQTKTEEFDAIKIALASPDMIRSWSFGEVKKPETINYRTFKPERYGLFCARIFGPVKDYECLCGKYKRLKHRGVICEKCGVEVTQTKVRRERMGHIELASPTAHIWFLKSLPSRIGLLLDMPLRDIERVLYFESYVVVEGGMTNLERRQILTEEQYLDALEEFGDEFDAKMGAEAIQALLKNMDLEQECEQLREELEETNSETKRKKLTKRIKLLEAFVLSGNKPEWMILTVLPVLPPDLRPLVPLDGGRFATSDLNDLYRRVINRNNRLKRLLDLAAPDIIVRNEKRMLQEAVDALLDNGRRGRAITGSNKRPLKSLADMIKGKQGRFRQNLLGKRVDYSGRSVITVGPYLRLHQCGLPKKMALELFKPFIYGKLELRGLATTIKAAKKMVEREEAVVWDILDEVIREHPVMLNRAPTLHRLGIQAFEPVLIEGKAIQLHPLVCAAYNADFDGDQMAVHVPLTLEAQLEARALMMSTNNILSPANGEPIIVPSQDVVLGLYYMTRDRVNGKGEGMVLTGPKEAERIYRAGVAELHARVKVRITEHEKRDNGESVENTHLVDTTVGRAILWMIVPKGLPFSLVNQALGKKAISKMLNTCYRVLGLKPTVIFADQIMYTGFAYAARSGSSVGIDDMVIPAKKAEIIDEAEAEVAEIQEQFQSGLVTAGERYNKVIDIWAAANERVAKAMMDNLSTEAVINRDGEEERQVSFNSIFMMADSGARGSAAQIRQLAGMRGLMAKPDGSIIETPITANFREGLNVLQYFISTHGARKGLADTALKTANSGYLTRRLVDVAQDLVVTEDDCGTFAGIVMTPVIEGGDVKEPLRERVLGRVTAEDVLKPGTADILVERNTLLNEKWCDVLEENSVDSVKVRSVVTCDTDFGVCANCYGRDLARGHLVNKGEAIGVIAAQSIGEPGTQLTMRTFHIGGAASRAAAESSIQVKNKGTIRLSNAKFVVNGSGKLVITSRNTELKLVDEFGRTKESYKVPYGAVMAKGDGAEIMGGETVANWDPHTMPVITEVDGFVRFTDMIDGQTITRQTDELTGLSSIVILDTAERTSGGKDLRPALRIVDANGNDVLLPGTDMPAQYFLPGKTIVQLEDGAKITGGDTLARLPQETSGTKDITGGLPRVADLFEARRPKEPAILAEISGIVSFGKETKGKRRLVISPVDGSDAYEEMIPKWRQLNVFEGERVERGDVISDGPESPHDILRLRGVHAVTRYIVNEVQDVYRLQGVKINDKHIEVIVRQMLRKATIASSGSSEFLEGEQVEYSRIKIANRQLENDGKVEMTYVRDLLGITKASLATESFISAASFQETTRVLTEAAVAGKRDELRGLKENVIVGRLIPAGTGYAYHQERARHRQQGEAPAAPQITADEASANLAELLNAGLGGNDD.

Residues C70, C72, C85, and C88 each coordinate Zn(2+). The Mg(2+) site is built by D460, D462, and D464. Zn(2+)-binding residues include C814, C888, C895, and C898.

The protein belongs to the RNA polymerase beta' chain family. In terms of assembly, the RNAP catalytic core consists of 2 alpha, 1 beta, 1 beta' and 1 omega subunit. When a sigma factor is associated with the core the holoenzyme is formed, which can initiate transcription. Mg(2+) serves as cofactor. Requires Zn(2+) as cofactor.

It carries out the reaction RNA(n) + a ribonucleoside 5'-triphosphate = RNA(n+1) + diphosphate. In terms of biological role, DNA-dependent RNA polymerase catalyzes the transcription of DNA into RNA using the four ribonucleoside triphosphates as substrates. The protein is DNA-directed RNA polymerase subunit beta' of Sodalis glossinidius (strain morsitans).